Reading from the N-terminus, the 748-residue chain is Bifunctional lysine-specific demethylase and histidyl-hydroxylase NO66 (748 aa).

Disordered regions lie at residues asparagine 65–tyrosine 135 and threonine 160–glycine 264. The span at leucine 94 to serine 110 shows a compositional bias: basic and acidic residues. Positions leucine 124–threonine 134 are enriched in polar residues. A compositionally biased stretch (acidic residues) spans valine 163–methionine 193. The span at isoleucine 194–isoleucine 203 shows a compositional bias: basic and acidic residues. The segment covering serine 207–glycine 264 has biased composition (acidic residues). Positions glutamine 399–alanine 543 constitute a JmjC domain. Residues histidine 442, aspartate 444, and histidine 509 each contribute to the Fe cation site.

It belongs to the ROX family. NO66 subfamily. The cofactor is Fe(2+).

It is found in the nucleus. It catalyses the reaction N(6),N(6)-dimethyl-L-lysyl(36)-[histone H3] + 2 2-oxoglutarate + 2 O2 = L-lysyl(36)-[histone H3] + 2 formaldehyde + 2 succinate + 2 CO2. Oxygenase that can act as both a histone lysine demethylase and a ribosomal histidine hydroxylase. Specifically demethylates 'Lys-4' (H3K4me) and 'Lys-36' (H3K36me) of histone H3, thereby playing a central role in histone code. Mediates response to multiple stress stimuli, including heat shock and osmotic, oxidative, and ethanol stress. This chain is Bifunctional lysine-specific demethylase and histidyl-hydroxylase NO66 (jmjc-1), found in Caenorhabditis elegans.